The sequence spans 234 residues: NAD-reducing hydrogenase HoxS subunit gamma (234 aa).

The region spanning 2 to 77 is the 2Fe-2S ferredoxin-type domain; the sequence is SIQITIDGKT…GLNVEVNDPE (76 aa). Positions 35, 46, 49, and 61 each coordinate [2Fe-2S] cluster. The region spanning 77–116 is the 4Fe-4S His(Cys)3-ligated-type domain; sequence ELVDMRKALVEFLFAEGNHNCPSCEKSGRCQLQAVGYEVD. Residues His95, Cys97, Cys100, Cys106, Cys145, Cys148, Cys151, and Cys198 each coordinate [4Fe-4S] cluster.

It belongs to the complex I 75 kDa subunit family. In terms of assembly, tetramer of an alpha and a gamma subunits (flavin-containing dimer), and a delta and a nickel-containing beta subunits (hydrogenase dimer). The cofactor is [2Fe-2S] cluster. [4Fe-4S] cluster serves as cofactor.

The protein localises to the cytoplasm. The catalysed reaction is H2 + NAD(+) = NADH + H(+). Its function is as follows. Subunits alpha and gamma of HoxS constitute an NADH--oxidoreductase. This Cupriavidus necator (strain ATCC 17699 / DSM 428 / KCTC 22496 / NCIMB 10442 / H16 / Stanier 337) (Ralstonia eutropha) protein is NAD-reducing hydrogenase HoxS subunit gamma (hoxU).